Consider the following 77-residue polypeptide: Large ribosomal subunit protein bL31 (77 aa).

It belongs to the bacterial ribosomal protein bL31 family. Type A subfamily. Part of the 50S ribosomal subunit.

Its function is as follows. Binds the 23S rRNA. The protein is Large ribosomal subunit protein bL31 of Paramagnetospirillum magneticum (strain ATCC 700264 / AMB-1) (Magnetospirillum magneticum).